The primary structure comprises 590 residues: O-fucosyltransferase 2 (590 aa).

Positions 1–16 (MGQERPNDEERPESRD) are enriched in basic and acidic residues. Residues 1-26 (MGQERPNDEERPESRDLGVYGCSPPH) form a disordered region. Residues 67–87 (TAIGVMAILGFFCLVNWFMLS) form a helical; Signal-anchor for type II membrane protein membrane-spanning segment. An N-linked (GlcNAc...) asparagine glycan is attached at Asn125. Substrate is bound at residue 365-367 (HLR). N-linked (GlcNAc...) asparagine glycans are attached at residues Asn485 and Asn546.

This sequence belongs to the glycosyltransferase GT106 family.

It is found in the membrane. It participates in glycan metabolism. The chain is O-fucosyltransferase 2 from Arabidopsis thaliana (Mouse-ear cress).